The chain runs to 192 residues: Potassium-transporting ATPase KdpC subunit (192 aa).

The chain crosses the membrane as a helical span at residues 14 to 34; that stretch reads LTGVLVVLCGLIYPAMVTGIA.

This sequence belongs to the KdpC family. The system is composed of three essential subunits: KdpA, KdpB and KdpC.

Its subcellular location is the cell membrane. Its function is as follows. Part of the high-affinity ATP-driven potassium transport (or Kdp) system, which catalyzes the hydrolysis of ATP coupled with the electrogenic transport of potassium into the cytoplasm. This subunit acts as a catalytic chaperone that increases the ATP-binding affinity of the ATP-hydrolyzing subunit KdpB by the formation of a transient KdpB/KdpC/ATP ternary complex. The protein is Potassium-transporting ATPase KdpC subunit of Bacillus cytotoxicus (strain DSM 22905 / CIP 110041 / 391-98 / NVH 391-98).